A 222-amino-acid polypeptide reads, in one-letter code: Small ribosomal subunit protein uS5 (222 aa).

Positions 1–41 (MAEQAGAGSAQDNRGGGRDDRGGRGRRDDRGGRGGRDDREK) are disordered. Positions 15-41 (GGGRDDRGGRGRRDDRGGRGGRDDREK) are enriched in basic and acidic residues. An S5 DRBM domain is found at 44–107 (YLERVVTINR…EEARKNFFRV (64 aa)).

The protein belongs to the universal ribosomal protein uS5 family. Part of the 30S ribosomal subunit. Contacts proteins S4 and S8.

Its function is as follows. With S4 and S12 plays an important role in translational accuracy. In terms of biological role, located at the back of the 30S subunit body where it stabilizes the conformation of the head with respect to the body. This is Small ribosomal subunit protein uS5 from Mycolicibacterium gilvum (strain PYR-GCK) (Mycobacterium gilvum (strain PYR-GCK)).